We begin with the raw amino-acid sequence, 368 residues long: N-acetylneuraminate epimerase 2 (368 aa).

The N-terminal stretch at 1-19 is a signal peptide; sequence MNKTITALAILMASFAANA. Kelch repeat units follow at residues 40 to 84, 86 to 137, 139 to 173, 174 to 219, 222 to 265, 287 to 336, and 338 to 367; these read TVYI…AFID, NLYV…FVHN, KAYV…KINA, YYFD…VNKG, TWLI…VAGG, ENYQ…LWNN, and LLII…VTVQ. Catalysis depends on Glu-228, which acts as the Proton acceptor.

Belongs to the NanM family. In terms of assembly, homodimer.

The protein resides in the periplasm. The enzyme catalyses N-acetyl-alpha-neuraminate = N-acetyl-beta-neuraminate. Converts alpha-N-acetylneuranimic acid (Neu5Ac) to the beta-anomer, accelerating the equilibrium between the alpha- and beta-anomers. Probably facilitates sialidase-negative bacteria to compete successfully for limited amounts of extracellular Neu5Ac, which is likely taken up in the beta-anomer. In addition, the rapid removal of sialic acid from solution might be advantageous to the bacterium to damp down host responses. This is N-acetylneuraminate epimerase 2 from Escherichia coli O6:H1 (strain CFT073 / ATCC 700928 / UPEC).